The chain runs to 322 residues: Phospho-N-acetylmuramoyl-pentapeptide-transferase (322 aa).

10 consecutive transmembrane segments (helical) span residues 10–30, 51–71, 79–99, 107–127, 146–166, 178–198, 203–223, 227–247, 250–270, and 302–322; these read YTAL…IPML, NGTP…TGLT, MAVG…DDFI, LGLK…YVAF, FVIN…VAIV, LASG…SSIA, VAVL…FNSY, VFMG…FSVL, SVLI…SVLI, and VVFI…IAVF.

Belongs to the glycosyltransferase 4 family. MraY subfamily. Mg(2+) serves as cofactor.

The protein resides in the cell membrane. The enzyme catalyses UDP-N-acetyl-alpha-D-muramoyl-L-alanyl-gamma-D-glutamyl-meso-2,6-diaminopimeloyl-D-alanyl-D-alanine + di-trans,octa-cis-undecaprenyl phosphate = di-trans,octa-cis-undecaprenyl diphospho-N-acetyl-alpha-D-muramoyl-L-alanyl-D-glutamyl-meso-2,6-diaminopimeloyl-D-alanyl-D-alanine + UMP. It participates in cell wall biogenesis; peptidoglycan biosynthesis. In terms of biological role, catalyzes the initial step of the lipid cycle reactions in the biosynthesis of the cell wall peptidoglycan: transfers peptidoglycan precursor phospho-MurNAc-pentapeptide from UDP-MurNAc-pentapeptide onto the lipid carrier undecaprenyl phosphate, yielding undecaprenyl-pyrophosphoryl-MurNAc-pentapeptide, known as lipid I. This is Phospho-N-acetylmuramoyl-pentapeptide-transferase from Clostridioides difficile (strain 630) (Peptoclostridium difficile).